A 525-amino-acid polypeptide reads, in one-letter code: Histidine-rich glycoprotein (525 aa).

The signal sequence occupies residues Met-1–Ala-18. In terms of domain architecture, Cystatin 1 spans Leu-19–Tyr-122. 5 disulfides stabilise this stretch: Cys-24–Cys-504, Cys-78–Cys-89, Cys-103–Cys-124, Cys-201–Cys-414, and Cys-216–Cys-239. Residues Gly-41–Lys-84 are interaction with ATP5F1A. Residues Asn-112 and Asn-123 are each glycosylated (N-linked (GlcNAc...) asparagine). The region spanning Asn-135–Glu-240 is the Cystatin 2 domain. Ser-145 carries the phosphoserine modification. Residue Asn-200 is glycosylated (N-linked (GlcNAc...) asparagine). The disordered stretch occupies residues Arg-275–Lys-445. Asn-322 and Asn-330 each carry an N-linked (GlcNAc...) asparagine glycan. Basic residues-rich tracts occupy residues His-339–His-392 and Gln-426–Pro-443. Residue Ser-438 is modified to Phosphoserine.

In terms of assembly, interacts with THBS1 (via the TSP type I repeats); the interaction blocks the antiangiogenic effect of THBS1 with CD36. Interacts with HPSE; the interaction is enhanced at acidic pH, partially inhibits binding of HPSE to cell surface receptors and modulates its enzymatic activity. Interacts (via the HRR domain) with TMP1; the interaction partially mediates the antiangiogenic properties of HRG. Interacts with kappa and lambda light chains of IgG molecules. Interacts with ATP5F1A; the interaction occurs on the surface of T-cells and alters their cell morphology in concert with CONA. Binds IgG molecules containing kappa and lambda light chains and inhibits the formation of insoluble immunoglobulin complexes. Interacts with F12; the interaction, which is enhanced in the presence of zinc ions and inhibited by heparin-binding to HRG, inhibits factor XII autoactivation and contact-initiated coagulation. Interacts with PLG (via its Kringle domains); the interaction tethers PLG to the cell surface and enhances its activation. Interacts (via the HRR domain) with TPM1; the interaction appears to contribute to the antiangiogenic properties of the HRR domain. Interacts with THBS2; the interaction blocks the antiangiogenic effect of THBS2 with CD36. N-glycosylated. In terms of processing, proteolytic cleavage produces several HRG fragments which are mostly disulfide-linked and, therefore, not released. Cleavage by plasmin is inhibited in the presence of heparin, zinc ions or in an acidic environment. Cleavage reduces binding of HRG to heparan sulfate, but enhances the ability of HRG to bind and tether plasminogen to the cell surface. On platelet activation, releases a 33 kDa antiangiogenic peptide which encompasses the HRR. Also cleaved in the C-terminal by plasmin. As to expression, expressed in liver, blood plasma, serum and in platelets. Also present in fibrin clots, wound fluid from acute wounds and chronic leg ulcers.

The protein resides in the secreted. In terms of biological role, plasma glycoprotein that binds a number of ligands such as heme, heparin, heparan sulfate, thrombospondin, plasminogen, and divalent metal ions. Inhibits rosette formation. Acts as an adapter protein and implicated in regulating many processes such as immune complex and pathogen clearance, cell adhesion, angiogenesis, coagulation and fibrinolysis. Mediates clearance of necrotic cells through enhancing the phagocytosis of necrotic cells in a heparan sulfate-dependent pathway. This process can be regulated by the presence of certain HRG ligands such as heparin and zinc ions. Binds to IgG subclasses of immunoglobins containing kappa and lambda light chains with different affinities regulating their clearance and inhibiting the formation of insoluble immune complexes. Tethers plasminogen to the cell surface. Binds T-cells and alters the cell morphology. Modulates angiogenesis by blocking the CD6-mediated antiangiongenic effect of thrombospondins, THBS1 and THBS2. The protein is Histidine-rich glycoprotein (Hrg) of Rattus norvegicus (Rat).